Here is a 620-residue protein sequence, read N- to C-terminus: Synchronized import protein 1 (620 aa).

Residues 1–32 (MGRSKKRSRASSSRLNPLRKAGSNDNNKDTNV) form a disordered region. ARM repeat units follow at residues 25 to 64 (DNNK…VLCE), 66 to 106 (AHMR…NLSL), 181 to 221 (DDIL…TTLD), 258 to 299 (ANEL…NIDP), 340 to 386 (IKLQ…NFLP), 435 to 470 (DSQD…NRAL), 471 to 510 (INVQ…TYAM), and 564 to 607 (RGGF…TLDS).

Belongs to the nuclear import and ribosome assembly adapter family. As to quaternary structure, forms a heterotrimeric complex with RPL5 and RPL11A or RPL11B; interaction of this complex with KAP104 allows the nuclear import of the heterotrimer. Component of a hexameric 5S RNP precursor complex, composed of 5S RNA, RRS1, RPF2, RPL5, RPL11A/RPL11B and SYO1; this complex acts as a precursor for ribosome assembly.

Its subcellular location is the cytoplasm. It localises to the nucleus. Its function is as follows. Nuclear import adapter that specifically recruits the two functionally and topologically linked ribosomal proteins RPL5 and RPL11 (encoded by RPL11A and RPL11B). Guarantees that this cargo pair remains bound together from the time of synthesis in the cytoplasm until delivery to the nascent 5S rRNA in the nucleus. This is Synchronized import protein 1 (SYO1) from Saccharomyces cerevisiae (strain ATCC 204508 / S288c) (Baker's yeast).